A 541-amino-acid chain; its full sequence is Kinesin light chain 1 (541 aa).

Residues 27–156 (KTKQVIQGLE…HLEFMNQLKK (130 aa)) adopt a coiled-coil conformation. Over residues 156–176 (KYDDDISPSEDKDSDSSKEPL) the composition is skewed to basic and acidic residues. The interval 156–201 (KYDDDISPSEDKDSDSSKEPLDDLFPNDEDEPGQGIQHSDSSAAAA) is disordered. Ser-162 carries the post-translational modification Phosphoserine. TPR repeat units follow at residues 211-244 (LRTL…LEKT), 253-286 (ATML…REKT), 295-328 (AATL…REKV), 337-370 (AKQL…YQTK), and 380-413 (AKTK…AHEA). Tyr-448 is subject to Phosphotyrosine. At Ser-459 the chain carries Phosphoserine. One copy of the TPR 6 repeat lies at 463–496 (TTTLKNLGALYRRQGKFEAAETLEEAAMRSRKQG). The interval 493-541 (RKQGLDNVHKQRVAEVLNDPESMEKRRSRESLNMDVVKYESGPDGGEEA) is disordered. 2 stretches are compositionally biased toward basic and acidic residues: residues 495 to 505 (QGLDNVHKQRV) and 514 to 524 (SMEKRRSRESL). Ser-520 and Ser-523 each carry phosphoserine; by AMPK.

This sequence belongs to the kinesin light chain family. As to quaternary structure, oligomeric complex composed of two heavy chains and two light chains. Interacts with SPAG9. Interacts with ATCAY; may link mitochondria to KLC1 and regulate mitochondria localization into neuron projections. Interacts (via TPR repeats) with TOR1A; the interaction associates TOR1A with the kinesin oligomeric complex. Interacts with BORCS5. Interacts with MAPK8IP3/JIP3 and NTRK2/TRKB; interaction with NTRK2/TRKB is mediated by MAPK8IP3/JIP3. Interacts with CLSTN1; phosphorylation at Ser-459 inhibits interaction with CLSTN1. Post-translationally, phosphorylation at Ser-459 by ERK inhibits interaction with CLSTN1 and localization to cytoplasmic vesicles.

The protein localises to the cell projection. Its subcellular location is the growth cone. The protein resides in the cytoplasmic vesicle. It is found in the cytoplasm. It localises to the cytoskeleton. Functionally, kinesin is a microtubule-associated force-producing protein that may play a role in organelle transport. The light chain may function in coupling of cargo to the heavy chain or in the modulation of its ATPase activity. The polypeptide is Kinesin light chain 1 (Klc1) (Mus musculus (Mouse)).